We begin with the raw amino-acid sequence, 457 residues long: RuvB-like helicase 1 (457 aa).

An ATP-binding site is contributed by 73–80 (GGPSTGKT).

This sequence belongs to the RuvB family. In terms of assembly, may form heterododecamers with RVB2. Component of the SWR1 chromatin remodeling complex, the INO80 chromatin remodeling complex, and of the R2TP complex.

It localises to the nucleus. The catalysed reaction is ATP + H2O = ADP + phosphate + H(+). Its function is as follows. DNA helicase which participates in several chromatin remodeling complexes, including the SWR1 and the INO80 complexes. The SWR1 complex mediates the ATP-dependent exchange of histone H2A for the H2A variant HZT1 leading to transcriptional regulation of selected genes by chromatin remodeling. The INO80 complex remodels chromatin by shifting nucleosomes and is involved in DNA repair. Also involved in pre-rRNA processing. This is RuvB-like helicase 1 (RVB1) from Candida glabrata (strain ATCC 2001 / BCRC 20586 / JCM 3761 / NBRC 0622 / NRRL Y-65 / CBS 138) (Yeast).